Reading from the N-terminus, the 492-residue chain is N-succinylglutamate 5-semialdehyde dehydrogenase (492 aa).

220-225 is a binding site for NAD(+); that stretch reads GSANTG. Residues Glu243 and Cys277 contribute to the active site.

This sequence belongs to the aldehyde dehydrogenase family. AstD subfamily.

It carries out the reaction N-succinyl-L-glutamate 5-semialdehyde + NAD(+) + H2O = N-succinyl-L-glutamate + NADH + 2 H(+). Its pathway is amino-acid degradation; L-arginine degradation via AST pathway; L-glutamate and succinate from L-arginine: step 4/5. Catalyzes the NAD-dependent reduction of succinylglutamate semialdehyde into succinylglutamate. This is N-succinylglutamate 5-semialdehyde dehydrogenase from Shigella flexneri.